We begin with the raw amino-acid sequence, 92 residues long: Putative transcription elongation factor S-II-like protein 81R (92 aa).

A TFIIS-type zinc finger spans residues 51-91; it reads GTVKCPGCGSRRVHALQRQTRSADEPMTLFAMCSECGKRWT. 4 residues coordinate Zn(2+): C55, C58, C83, and C86.

The chain is Putative transcription elongation factor S-II-like protein 81R from Dryophytes versicolor (chameleon treefrog).